The primary structure comprises 487 residues: Probable glycine dehydrogenase (decarboxylating) subunit 2 (487 aa).

The residue at position 273 (Lys-273) is an N6-(pyridoxal phosphate)lysine.

It belongs to the GcvP family. C-terminal subunit subfamily. In terms of assembly, the glycine cleavage system is composed of four proteins: P, T, L and H. In this organism, the P 'protein' is a heterodimer of two subunits. It depends on pyridoxal 5'-phosphate as a cofactor.

The enzyme catalyses N(6)-[(R)-lipoyl]-L-lysyl-[glycine-cleavage complex H protein] + glycine + H(+) = N(6)-[(R)-S(8)-aminomethyldihydrolipoyl]-L-lysyl-[glycine-cleavage complex H protein] + CO2. Its function is as follows. The glycine cleavage system catalyzes the degradation of glycine. The P protein binds the alpha-amino group of glycine through its pyridoxal phosphate cofactor; CO(2) is released and the remaining methylamine moiety is then transferred to the lipoamide cofactor of the H protein. In Lysinibacillus sphaericus (strain C3-41), this protein is Probable glycine dehydrogenase (decarboxylating) subunit 2.